Reading from the N-terminus, the 367-residue chain is Probable butyrate kinase (367 aa).

It belongs to the acetokinase family.

It is found in the cytoplasm. The enzyme catalyses butanoate + ATP = butanoyl phosphate + ADP. This Exiguobacterium sibiricum (strain DSM 17290 / CCUG 55495 / CIP 109462 / JCM 13490 / 255-15) protein is Probable butyrate kinase.